A 190-amino-acid polypeptide reads, in one-letter code: Cytoglobin (190 aa).

In terms of domain architecture, Globin spans 18–167 (ELSEAERKAV…IYSHVTAAYK (150 aa)). A disulfide bridge connects residues Cys38 and Cys83. Heme b contacts are provided by His81 and His113.

It belongs to the globin family. In terms of assembly, monomeric. Homodimer; disulfide-linked in vitro. Also homooligomeric in vitro. In terms of processing, the formation of an intramolecular disulfide bond between cysteines Cys-38 and Cys-83 specifically enhances the nitrite reductase activity. Widely expressed. Highest expression in heart, stomach, bladder and small intestine.

The protein resides in the cytoplasm. Its subcellular location is the nucleus. It catalyses the reaction Fe(II)-heme b-[protein] + nitric oxide + O2 = Fe(III)-heme b-[protein] + nitrate. The enzyme catalyses Fe(III)-heme b-[protein] + nitric oxide + H2O = Fe(II)-heme b-[protein] + nitrite + 2 H(+). The catalysed reaction is 2 superoxide + 2 H(+) = H2O2 + O2. It carries out the reaction H2O2 + AH2 = A + 2 H2O. Its activity is regulated as follows. The nitric oxide dioxygenase activity is activated by a reducing system composed of cytochrome b5, its upstream reductase CYB5R3 and NADH. In terms of biological role, probable multifunctional globin with a hexacoordinated heme iron required for the catalysis of various reactions depending on redox condition of the cell as well as oxygen availability. Has a nitric oxide dioxygenase (NOD) activity and is most probably involved in cell-mediated and oxygen-dependent nitric oxide consumption. By scavenging this second messenger may regulate several biological processes including endothelium-mediated vasodilation and vascular tone. Under normoxic conditions functions as a nitric oxide dioxygenase (NOD) but under hypoxic conditions the globin may switch its function to that of a nitrite (NO2) reductase (NiR), generating nitric oxide. Could also have peroxidase and superoxide dismutase activities, detoxifying reactive oxygen species and protecting cells against oxidative stress. Also binds dioxygen with low affinity and could function as an oxygen sensor but has probably no function as a respiratory oxygen carrier. The protein is Cytoglobin of Homo sapiens (Human).